The sequence spans 297 residues: Probable tyrosine phosphatase protein J2 (297 aa).

The 266-residue stretch at 21–286 (DSLSCIIQEY…VFCYHLIHAY (266 aa)) folds into the Tyrosine-protein phosphatase domain. C227 functions as the Phosphocysteine intermediate in the catalytic mechanism.

The protein belongs to the protein-tyrosine phosphatase family.

The catalysed reaction is O-phospho-L-tyrosyl-[protein] + H2O = L-tyrosyl-[protein] + phosphate. In Microplitis demolitor (Parasitoid wasp), this protein is Probable tyrosine phosphatase protein J2 (J3).